We begin with the raw amino-acid sequence, 313 residues long: Probable cell division protein WhiA (313 aa).

The segment at residues Ser274–Ala308 is a DNA-binding region (H-T-H motif).

This sequence belongs to the WhiA family.

Involved in cell division and chromosome segregation. This is Probable cell division protein WhiA from Limosilactobacillus reuteri subsp. reuteri (strain JCM 1112) (Lactobacillus reuteri).